A 186-amino-acid polypeptide reads, in one-letter code: dCTP deaminase, dUMP-forming (186 aa).

DCTP is bound by residues R101 to R106, D119, T127 to E129, Q148, Y162, and Q171. Catalysis depends on E129, which acts as the Proton donor/acceptor.

The protein belongs to the dCTP deaminase family. Homotrimer.

The enzyme catalyses dCTP + 2 H2O = dUMP + NH4(+) + diphosphate. It functions in the pathway pyrimidine metabolism; dUMP biosynthesis; dUMP from dCTP: step 1/1. Functionally, bifunctional enzyme that catalyzes both the deamination of dCTP to dUTP and the hydrolysis of dUTP to dUMP without releasing the toxic dUTP intermediate. This Coprothermobacter proteolyticus (strain ATCC 35245 / DSM 5265 / OCM 4 / BT) protein is dCTP deaminase, dUMP-forming.